The following is a 184-amino-acid chain: Ribosome-recycling factor (184 aa).

This sequence belongs to the RRF family.

The protein localises to the cytoplasm. Its function is as follows. Responsible for the release of ribosomes from messenger RNA at the termination of protein biosynthesis. May increase the efficiency of translation by recycling ribosomes from one round of translation to another. The polypeptide is Ribosome-recycling factor (Clostridium botulinum (strain ATCC 19397 / Type A)).